The primary structure comprises 61 residues: Probable tautomerase LMOf2365_2536 (61 aa).

The Proton acceptor; via imino nitrogen role is filled by Pro2.

The protein belongs to the 4-oxalocrotonate tautomerase family.

In Listeria monocytogenes serotype 4b (strain F2365), this protein is Probable tautomerase LMOf2365_2536.